A 330-amino-acid chain; its full sequence is Thiosulfate transporter TsuA (330 aa).

Residues 1-2 (MI) lie on the Periplasmic side of the membrane. Residues 3–18 (WTGLLVGFLFGIVLQR) traverse the membrane as a helical segment. Residues 19–36 (GRICFNSAFRDVLLFKDN) lie on the Cytoplasmic side of the membrane. A helical transmembrane segment spans residues 37–59 (YLFKLAVFTLALEMILFVLLSQV). Residues 60-70 (GLMQMNPKPLN) are Periplasmic-facing. The helical transmembrane segment at 71-87 (LVGNIIGGFVFGLGMVL) threads the bilayer. Residues 88–102 (AGGCASGVTYRVGEG) are Cytoplasmic-facing. A helical membrane pass occupies residues 103–121 (LTTAWFAALFYGLGAYATK). Residues 122-162 (SGAFSWWLSWVGQFKSPLSVEESAYYVKGAGPTISSVLGLN) lie on the Periplasmic side of the membrane. Residues 163–180 (PWIPALVIAALFILWAFG) form a helical membrane-spanning segment. Residues 181-189 (TKTTSRETK) are Cytoplasmic-facing. A helical membrane pass occupies residues 190-211 (FNWKIASVCLALVAGLGFITST). Residues 212–239 (LSGRKYGLGITGGWINLFQGFLTNSPLN) are Periplasmic-facing. Residues 240-258 (WEGLEIVGIILGAGVAAAV) form a helical membrane-spanning segment. Residues 259–269 (AGEFKLRMPKN) are Cytoplasmic-facing. A helical membrane pass occupies residues 270–289 (PVTYLQVGIGGLLMGIGAVT). Topologically, residues 290 to 306 (AGGCNIGHFLTGVPQLA) are periplasmic. Residues 307–326 (LSSWLASIFFILGNWTMAWI) traverse the membrane as a helical segment. Topologically, residues 327–330 (LFRR) are cytoplasmic.

This sequence belongs to the TsuA/YedE (TC 9.B.102) family.

It is found in the cell inner membrane. The enzyme catalyses thiosulfate(in) = thiosulfate(out). Mediates thiosulfate uptake. In Spirochaeta thermophila (strain ATCC 700085 / DSM 6578 / Z-1203), this protein is Thiosulfate transporter TsuA.